The chain runs to 517 residues: Tyrosine-protein kinase Fgr (517 aa).

A lipid anchor (N-myristoyl glycine) is attached at Gly2. S-palmitoyl cysteine attachment occurs at residues Cys3 and Cys6. A Phosphoserine modification is found at Ser13. A Phosphotyrosine modification is found at Tyr32. At Ser50 the chain carries Phosphoserine. The SH3 domain occupies 65–126; it reads TGVTIFVALY…PSNYVAPVDS (62 aa). The interval 102 to 103 is interaction with CLNK; the sequence is WW. The region spanning 132 to 229 is the SH2 domain; that stretch reads WYFGKISRKD…GLCYLLTAPC (98 aa). Tyr196 carries the phosphotyrosine modification. Residue Ser206 is modified to Phosphoserine. In terms of domain architecture, Protein kinase spans 251 to 504; sequence IALERRLGTG…YLQSFLEDYF (254 aa). Residues 257–265 and Lys279 each bind ATP; that span reads LGTGCFGDV. Asp370 functions as the Proton acceptor in the catalytic mechanism. Tyr400 is modified (phosphotyrosine). Position 511 is a phosphotyrosine; by SRC (Tyr511).

It belongs to the protein kinase superfamily. Tyr protein kinase family. SRC subfamily. Interacts with ITGB1, ITGB2, MS4A2/FCER1B, FCER1G and FCGR2. Interacts (via SH2 domain) with SYK (tyrosine phosphorylated). Interacts (via SH2 domain) with FLT3 (tyrosine phosphorylated). Interacts with PTK2/FAK1. Interacts (via SH2 domain) with HCLS1 (tyrosine phosphorylated by SYK). Interacts with SIRPA and PTPNS1. Interacts (not phosphorylated on tyrosine residues) with CBL; FGR tyrosine phosphorylation promotes dissociation. Interacts with CLNK. In terms of processing, ubiquitinated. Becomes ubiquitinated in response to ITGB2 signaling; this does not lead to degradation. Phosphorylated. Autophosphorylated on tyrosine residues. Becomes phosphorylated in response to FCGR2 engagement, cell adhesion and signaling by ITGB2. Prior phosphorylation at Tyr-511 by SRC inhibits ulterior autophosphorylation at Tyr-400. Expressed in natural killer cells (at protein level).

The protein localises to the cell membrane. Its subcellular location is the cell projection. The protein resides in the ruffle membrane. It is found in the cytoplasm. It localises to the cytosol. The protein localises to the cytoskeleton. Its subcellular location is the mitochondrion inner membrane. The protein resides in the mitochondrion intermembrane space. It catalyses the reaction L-tyrosyl-[protein] + ATP = O-phospho-L-tyrosyl-[protein] + ADP + H(+). With respect to regulation, activated by autophosphorylation. Prior phosphorylation at Tyr-511 by SRC inhibits ulterior autophosphorylation at Tyr-400. Activated by phorbol myristate acetate, phosphatidic acid and poly-Lys. Binding (via SH2 domain) of HCLS1 that is already phosphorylated by SYK strongly increases kinase activity. Functionally, non-receptor tyrosine-protein kinase that transmits signals from cell surface receptors devoid of kinase activity and contributes to the regulation of immune responses, including neutrophil, monocyte, macrophage and mast cell functions, cytoskeleton remodeling in response to extracellular stimuli, phagocytosis, cell adhesion and migration. Promotes mast cell degranulation, release of inflammatory cytokines and IgE-mediated anaphylaxis. Acts downstream of receptors that bind the Fc region of immunoglobulins, such as MS4A2/FCER1B, FCER1G and FCGR2. Acts downstream of ITGB1 and ITGB2, and regulates actin cytoskeleton reorganization, cell spreading and adhesion. Depending on the context, activates or inhibits cellular responses. Functions as a negative regulator of ITGB2 signaling, phagocytosis and SYK activity in monocytes. Required for normal ITGB1 and ITGB2 signaling, normal cell spreading and adhesion in neutrophils and macrophages. Functions as a positive regulator of cell migration and regulates cytoskeleton reorganization via RAC1 activation. Phosphorylates SYK (in vitro) and promotes SYK-dependent activation of AKT1 and MAP kinase signaling. Phosphorylates PLD2 in antigen-stimulated mast cells, leading to PLD2 activation and the production of the signaling molecules lysophosphatidic acid and diacylglycerol. Promotes activation of PIK3R1. Phosphorylates FASLG, and thereby regulates its ubiquitination and subsequent internalization. Phosphorylates ABL1. Promotes phosphorylation of CBL, CTTN, PIK3R1, PTK2/FAK1, PTK2B/PYK2 and VAV2. Phosphorylates HCLS1 that has already been phosphorylated by SYK, but not unphosphorylated HCLS1. Together with CLNK, it acts as a negative regulator of natural killer cell-activating receptors and inhibits interferon-gamma production. The sequence is that of Tyrosine-protein kinase Fgr (Fgr) from Mus musculus (Mouse).